The chain runs to 352 residues: Heat-inducible transcription repressor HrcA (352 aa).

This sequence belongs to the HrcA family.

Its function is as follows. Negative regulator of class I heat shock genes (grpE-dnaK-dnaJ and groELS operons). Prevents heat-shock induction of these operons. This chain is Heat-inducible transcription repressor HrcA, found in Ralstonia nicotianae (strain ATCC BAA-1114 / GMI1000) (Ralstonia solanacearum).